The chain runs to 391 residues: Phosphoglycerate kinase (391 aa).

Substrate contacts are provided by residues 21-23, R36, 59-62, R113, and R146; these read DLN and HLGR. ATP contacts are provided by residues K197, E319, and 345–348; that span reads GGDT.

Belongs to the phosphoglycerate kinase family. As to quaternary structure, monomer.

The protein resides in the cytoplasm. The enzyme catalyses (2R)-3-phosphoglycerate + ATP = (2R)-3-phospho-glyceroyl phosphate + ADP. Its pathway is carbohydrate degradation; glycolysis; pyruvate from D-glyceraldehyde 3-phosphate: step 2/5. The sequence is that of Phosphoglycerate kinase from Xanthomonas campestris pv. campestris (strain 8004).